The chain runs to 255 residues: tRNA1(Val) (adenine(37)-N6)-methyltransferase (255 aa).

It belongs to the methyltransferase superfamily. tRNA (adenine-N(6)-)-methyltransferase family.

The protein resides in the cytoplasm. The catalysed reaction is adenosine(37) in tRNA1(Val) + S-adenosyl-L-methionine = N(6)-methyladenosine(37) in tRNA1(Val) + S-adenosyl-L-homocysteine + H(+). In terms of biological role, specifically methylates the adenine in position 37 of tRNA(1)(Val) (anticodon cmo5UAC). The chain is tRNA1(Val) (adenine(37)-N6)-methyltransferase from Porphyromonas gingivalis (strain ATCC 33277 / DSM 20709 / CIP 103683 / JCM 12257 / NCTC 11834 / 2561).